The sequence spans 62 residues: UPF0337 protein XCC0070 (62 aa).

The interval leucine 32–arginine 62 is disordered.

Belongs to the UPF0337 (CsbD) family.

The chain is UPF0337 protein XCC0070 from Xanthomonas campestris pv. campestris (strain ATCC 33913 / DSM 3586 / NCPPB 528 / LMG 568 / P 25).